Reading from the N-terminus, the 1005-residue chain is Translocated actin-recruiting phosphoprotein (1005 aa).

A compositionally biased stretch (polar residues) spans 1 to 10 (MTNSISGYQP). Disordered regions lie at residues 1 to 36 (MTNSISGYQPTVTTSTSSTTSASGASGSLGASSVST), 73 to 155 (APNV…SNYD), 487 to 521 (INWGTQAGPSSEDDGISFSNETPGAGPAAAPSPTP), 542 to 626 (DTNV…DGPA), 671 to 749 (GSAQ…GPSG), and 792 to 847 (TGTS…TSLM). Low complexity-rich tracts occupy residues 11–36 (TVTTSTSSTTSASGASGSLGASSVST) and 73–121 (APNV…SSDH). Positions 130 to 154 (GSNSGDISNNYDDVGSNNGDISSNY) are enriched in polar residues. 4 stretches are compositionally biased toward low complexity: residues 542–578 (DTNVNTTNTTPTTQSTDASTDTSDIDDINTNNQTDDI), 593–612 (GDISETESSSGDDSGSVSSS), 720–736 (SSSGDESGGVSSPSSES), and 831–846 (STTTLRTGTGATTTSL).

The protein belongs to the chlamydial CPn_0572/CT_456/TC_0741 family. Post-translationally, phosphorylated on a tyrosine on attachment to the host cell. Tyrosine phosphorylation is temporally and spatially associated with recruitment of actin to the site of chlamydial entry. Phosphorylated Tarp seems to remain cytoplasmically exposed on the inclusion membrane at one side of internalized elementary bodies for several hours after entry.

The protein resides in the secreted. Functionally, appears to initiate or participate in signaling events that regulate the actin recruitment, which ultimately leads to internalization. The protein is Translocated actin-recruiting phosphoprotein (tarP) of Chlamydia trachomatis serovar D (strain ATCC VR-885 / DSM 19411 / UW-3/Cx).